The sequence spans 206 residues: Large ribosomal subunit protein bL9 (206 aa).

The disordered stretch occupies residues 182–206; the sequence is FAENQQKALAKEMNDNDANSINEEA. Positions 197–206 are enriched in polar residues; sequence NDANSINEEA.

This sequence belongs to the bacterial ribosomal protein bL9 family.

Its function is as follows. Binds to the 23S rRNA. This Bartonella henselae (strain ATCC 49882 / DSM 28221 / CCUG 30454 / Houston 1) (Rochalimaea henselae) protein is Large ribosomal subunit protein bL9.